The sequence spans 548 residues: Probable malate:quinone oxidoreductase (548 aa).

The interval 521–548 (DKPQAADSTPKPQLKPQPVQKEVADIAL) is disordered. The span at 530-541 (PKPQLKPQPVQK) shows a compositional bias: low complexity.

The protein belongs to the MQO family. The cofactor is FAD.

It carries out the reaction (S)-malate + a quinone = a quinol + oxaloacetate. Its pathway is carbohydrate metabolism; tricarboxylic acid cycle; oxaloacetate from (S)-malate (quinone route): step 1/1. The sequence is that of Probable malate:quinone oxidoreductase from Shigella sonnei (strain Ss046).